A 313-amino-acid polypeptide reads, in one-letter code: Peptidyl-prolyl cis-trans isomerase 9 (313 aa).

Residues 9–174 (FLDMALDEKP…AKVRIFNSGE (166 aa)) enclose the PPIase cyclophilin-type domain. Composition is skewed to basic and acidic residues over residues 216 to 230 (EERESDFSSKTESSR) and 253 to 269 (RGDRNRRTQRADRKDDF). Disordered regions lie at residues 216 to 274 (EERE…IAVR) and 288 to 313 (TPEHWRRNAPSKWQQGSYTHPVDLQP).

The protein belongs to the cyclophilin-type PPIase family.

The enzyme catalyses [protein]-peptidylproline (omega=180) = [protein]-peptidylproline (omega=0). PPIases accelerate the folding of proteins. It catalyzes the cis-trans isomerization of proline imid ic peptide bonds in oligopeptides. Thought to function as a catalyst in the folding and modification of cuticle collagens. The sequence is that of Peptidyl-prolyl cis-trans isomerase 9 from Caenorhabditis briggsae.